The chain runs to 661 residues: Sodium/potassium/calcium exchanger 2 (661 aa).

At Met-1–Arg-38 the chain is on the cytoplasmic side. Residues Val-39–Phe-59 traverse the membrane as a helical segment. At Ser-60–Lys-132 the chain is on the extracellular side. Residues Pro-99–Tyr-120 are disordered. A compositionally biased stretch (basic and acidic residues) spans Lys-105 to Tyr-120. N-linked (GlcNAc...) asparagine glycosylation occurs at Asn-111. Residues Gly-133–Cys-153 traverse the membrane as a helical segment. Residues Asp-154–Thr-178 lie on the Cytoplasmic side of the membrane. An Alpha-1 repeat occupies Val-174–Phe-214. Residues Phe-179–Ala-199 traverse the membrane as a helical segment. Residues His-200–Gly-204 are Extracellular-facing. A helical transmembrane segment spans residues Ile-205 to Leu-225. The Cytoplasmic segment spans residues Phe-226–Ser-243. The chain crosses the membrane as a helical span at residues Phe-244–Trp-264. A topological domain (extracellular) is located at residue Glu-265. Residues Ser-266–Val-286 form a helical membrane-spanning segment. Over Glu-287–Lys-497 the chain is Cytoplasmic. Residues Glu-306–Ser-336 are disordered. Residues Ser-336 and Ser-340 each carry the phosphoserine modification. A disordered region spans residues Asp-397–Leu-439. The segment covering Pro-415–Leu-439 has biased composition (polar residues). Residues Phe-498–Val-518 form a helical membrane-spanning segment. Residues Trp-519–Glu-533 lie on the Extracellular side of the membrane. A helical membrane pass occupies residues Ile-534 to Ile-554. An Alpha-2 repeat occupies Ala-541–Asn-572. Over Val-555 to Val-569 the chain is Cytoplasmic. A helical membrane pass occupies residues Gly-570 to Ile-590. At His-591–Gly-602 the chain is on the extracellular side. A helical membrane pass occupies residues Leu-603–Leu-623. The Cytoplasmic portion of the chain corresponds to Cys-624–Lys-630. A helical membrane pass occupies residues Ile-631–Glu-651. Residues Asp-652–Ile-661 are Extracellular-facing.

This sequence belongs to the Ca(2+):cation antiporter (CaCA) (TC 2.A.19) family. SLC24A subfamily.

Its subcellular location is the cell membrane. The enzyme catalyses Ca(2+)(out) + K(+)(out) + 4 Na(+)(in) = Ca(2+)(in) + K(+)(in) + 4 Na(+)(out). Calcium, potassium:sodium antiporter that transports 1 Ca(2+) and 1 K(+) in exchange for 4 Na(+). Required for learming and memory by regulating neuronal Ca(2+), which is essential for the development of synaptic plasticity. The sequence is that of Sodium/potassium/calcium exchanger 2 (SLC24A2) from Homo sapiens (Human).